The primary structure comprises 72 residues: Translation initiation factor IF-1 (72 aa).

Positions 1 to 72 constitute an S1-like domain; sequence MPKDDSIEVE…TRGRITYRAK (72 aa).

The protein belongs to the IF-1 family. Component of the 30S ribosomal translation pre-initiation complex which assembles on the 30S ribosome in the order IF-2 and IF-3, IF-1 and N-formylmethionyl-tRNA(fMet); mRNA recruitment can occur at any time during PIC assembly.

The protein localises to the cytoplasm. In terms of biological role, one of the essential components for the initiation of protein synthesis. Stabilizes the binding of IF-2 and IF-3 on the 30S subunit to which N-formylmethionyl-tRNA(fMet) subsequently binds. Helps modulate mRNA selection, yielding the 30S pre-initiation complex (PIC). Upon addition of the 50S ribosomal subunit IF-1, IF-2 and IF-3 are released leaving the mature 70S translation initiation complex. The protein is Translation initiation factor IF-1 of Myxococcus xanthus (strain DK1622).